Here is a 46-residue protein sequence, read N- to C-terminus: Photosystem II reaction center protein Psb30 (46 aa).

Met-1 is subject to N-formylmethionine. Residues Met-1–Ala-20 lie on the Lumenal side of the membrane. Residues Gln-21 to Leu-38 traverse the membrane as a helical segment. At Leu-39–Leu-46 the chain is on the cytoplasmic side.

Belongs to the Psb30/Ycf12 family. As to quaternary structure, PSII is composed of 1 copy each of membrane proteins PsbA, PsbB, PsbC, PsbD, PsbE, PsbF, PsbH, PsbI, PsbJ, PsbK, PsbL, PsbM, PsbT, PsbX, PsbY, PsbZ, Psb30/Ycf12, peripheral proteins PsbO, CyanoQ (PsbQ), PsbU, PsbV and a large number of cofactors. It forms dimeric complexes. Part of a photosystem II (PSII) assembly intermediate complex PSII-I; crystallized from a strain deleted of psbJ, it forms monomeric PSII before addition of the oxygen evolving complex. PSII-I includes 3 assembly factors not found in mature PSII (Psb27, Psb28 and Psb34). Requires PSII binds multiple chlorophylls, carotenoids and specific lipids. as cofactor.

The protein localises to the cellular thylakoid membrane. Its function is as follows. A core subunit of photosystem II (PSII). PSII is a light-driven water plastoquinone oxidoreductase, using light energy to abstract electrons from H(2)O, generating a proton gradient subsequently used for ATP formation. Helps stabilize PSII. The protein is Photosystem II reaction center protein Psb30 of Thermosynechococcus vestitus (strain NIES-2133 / IAM M-273 / BP-1).